Here is a 293-residue protein sequence, read N- to C-terminus: Protease HtpX (293 aa).

The next 2 helical transmembrane spans lie at 4-24 (IALF…VLSL) and 32-52 (VTGL…VSLL). Zn(2+) is bound at residue His139. Residue Glu140 is part of the active site. His143 provides a ligand contact to Zn(2+). 2 helical membrane-spanning segments follow: residues 158 to 178 (VVNT…AGFL) and 193 to 213 (LIYF…ASII). Glu222 lines the Zn(2+) pocket.

The protein belongs to the peptidase M48B family. Zn(2+) serves as cofactor.

It localises to the cell inner membrane. This Cronobacter sakazakii (strain ATCC BAA-894) (Enterobacter sakazakii) protein is Protease HtpX.